We begin with the raw amino-acid sequence, 260 residues long: Exosome complex component Rrp42 (260 aa).

It belongs to the RNase PH family. Rrp42 subfamily. In terms of assembly, component of the archaeal exosome complex. Forms a hexameric ring-like arrangement composed of 3 Rrp41-Rrp42 heterodimers. The hexameric ring associates with a trimer of Rrp4 and/or Csl4 subunits.

The protein resides in the cytoplasm. Its function is as follows. Non-catalytic component of the exosome, which is a complex involved in RNA degradation. Contributes to the structuring of the Rrp41 active site. This chain is Exosome complex component Rrp42, found in Methanocella arvoryzae (strain DSM 22066 / NBRC 105507 / MRE50).